Here is a 626-residue protein sequence, read N- to C-terminus: ATP-dependent zinc metalloprotease FtsH 3 (626 aa).

Residues 1-7 are Cytoplasmic-facing; that stretch reads MNKLFRS. The chain crosses the membrane as a helical span at residues 8-28; it reads LAFYMLILVISVAIAVQLGGT. The Extracellular portion of the chain corresponds to 29–103; it reads SQQTTQLVYS…LDFRQDNTSG (75 aa). Residues 104–124 traverse the membrane as a helical segment; sequence IWAMLLQTLVPVVLVLLAFFF. Over 125 to 626 the chain is Cytoplasmic; it reads IMQQTQGSGN…GGTSQVAPAF (502 aa). 197–204 lines the ATP pocket; that stretch reads GPPGTGKT. His420 contributes to the Zn(2+) binding site. The active site involves Glu421. Zn(2+) is bound by residues His424 and Asp496. Residues 602 to 626 form a disordered region; that stretch reads PPRPKPEPLKPRMVGGGTSQVAPAF.

The protein in the central section; belongs to the AAA ATPase family. It in the C-terminal section; belongs to the peptidase M41 family. In terms of assembly, homohexamer. The cofactor is Zn(2+).

The protein resides in the cell membrane. Functionally, acts as a processive, ATP-dependent zinc metallopeptidase for both cytoplasmic and membrane proteins. Plays a role in the quality control of integral membrane proteins. The chain is ATP-dependent zinc metalloprotease FtsH 3 from Symbiobacterium thermophilum (strain DSM 24528 / JCM 14929 / IAM 14863 / T).